The primary structure comprises 525 residues: Mitochondrial-processing peptidase subunit alpha (525 aa).

The N-terminal 33 residues, 1–33, are a transit peptide targeting the mitochondrion; it reads MAAVVLAATRLLRGSGSWGCSRLRFGPPAYRRF. Lysine 64 carries the post-translational modification N6-succinyllysine. Lysine 299 is subject to N6-acetyllysine.

Belongs to the peptidase M16 family. In terms of assembly, heterodimer of PMPCA (alpha) and PMPCB (beta) subunits, forming the mitochondrial processing protease (MPP) in which PMPCA is involved in substrate recognition and binding and PMPCB is the catalytic subunit. In terms of tissue distribution, ubiquitously expressed with highest expression in fetal tissues and adult brain, cerebellum and cerebellar vermis.

The protein localises to the mitochondrion matrix. Its subcellular location is the mitochondrion inner membrane. In terms of biological role, substrate recognition and binding subunit of the essential mitochondrial processing protease (MPP), which cleaves the mitochondrial sequence off newly imported precursors proteins. The polypeptide is Mitochondrial-processing peptidase subunit alpha (PMPCA) (Homo sapiens (Human)).